Consider the following 564-residue polypeptide: 5-hydroxytryptamine receptor 1 (564 aa).

The interval 1–26 (MALSGQDWRRHQSHRQHRNHRTQGNH) is disordered. The span at 11–23 (HQSHRQHRNHRTQ) shows a compositional bias: basic residues. A helical transmembrane segment spans residues 29 to 51 (LISTATLTLFVLFLSSWIAYAAG). Repeat copies occupy residues 89–90 (GS), 91–92 (GS), 93–94 (GS), 95–96 (GS), 97–98 (GS), 99–100 (GS), 101–102 (GS), 103–104 (GS), and 105–106 (GS). The 9 X 2 AA tandem repeats of G-S stretch occupies residues 89-106 (GSGSGSGSGSGSGSGSGS). The helical transmembrane segment at 165–188 (VSIVLLIVILGTVVGNVLVCIAVC) threads the bilayer. Over 189-198 (MVRKLRRPCN) the chain is Cytoplasmic. Residues 199 to 222 (YLLVSLALSDLCVALLVMPMALLY) form a helical membrane-spanning segment. The Extracellular segment spans residues 223-236 (EVLEKWNFGPLLCD). Cys235 and Cys314 form a disulfide bridge. A helical transmembrane segment spans residues 237 to 258 (IWVSFDVLCCTASILNLCAISV). Residues 238–247 (WVSFDVLCCT) form an agonist binding region. Positions 242 and 247 each coordinate ergotamine. The DRY motif; important for ligand-induced conformation changes signature appears at 259–261 (DRY). Topologically, residues 259–278 (DRYLAITKPLEYGVKRTPRR) are cytoplasmic. Residues 279–302 (MMLCVGIVWLAAACISLPPLLILG) form a helical membrane-spanning segment. Residues 303-330 (NEHEDEEGQPICTVCQNFAYQIYATLGS) lie on the Extracellular side of the membrane. The chain crosses the membrane as a helical span at residues 331–353 (FYIPLSVMLFVYYQIFRAARRIV). Residues 354 to 454 (LEEKRAQTHL…QLAKEKKAST (101 aa)) lie on the Cytoplasmic side of the membrane. Positions 367-396 (LNGTGSPSAPQAPPLGHTELASSGNGQRHS) are disordered. The span at 386 to 396 (LASSGNGQRHS) shows a compositional bias: polar residues. The helical transmembrane segment at 455-476 (TLGIIMSAFTVCWLPFFILALI) threads the bilayer. Residues 477-487 (RPFETMHVPAS) are Extracellular-facing. The helical transmembrane segment at 488-510 (LSSLFLWLGYANSLLNPIIYATL) threads the bilayer. The NPxxY motif; important for ligand-induced conformation changes and signaling motif lies at 503-507 (NPIIY). Residues 511–564 (NRDFRKPFQEILYFRCSSLNTMMRENYYQDQYGEPPSQRVMLGDERHGARESFL) lie on the Cytoplasmic side of the membrane.

This sequence belongs to the G-protein coupled receptor 1 family. 5-hydroxytryptamine receptor subfamily. Expressed predominantly in adult heads.

It localises to the cell membrane. In terms of biological role, G-protein coupled receptor for 5-hydroxytryptamine (serotonin). Also functions as a receptor for various alkaloids. Ligand binding causes a conformation change that triggers signaling via guanine nucleotide-binding proteins (G proteins) and modulates the activity of down-stream effectors, such as adenylate cyclase. Signaling activates adenylate cyclase activity. This Drosophila melanogaster (Fruit fly) protein is 5-hydroxytryptamine receptor 1 (5-HT7).